A 186-amino-acid chain; its full sequence is Ribosome-recycling factor (186 aa).

The protein belongs to the RRF family.

The protein resides in the cytoplasm. Responsible for the release of ribosomes from messenger RNA at the termination of protein biosynthesis. May increase the efficiency of translation by recycling ribosomes from one round of translation to another. This is Ribosome-recycling factor from Prosthecochloris aestuarii (strain DSM 271 / SK 413).